We begin with the raw amino-acid sequence, 1097 residues long: Transmembrane protein 132D (1097 aa).

The signal sequence occupies residues 1-30; it reads MCPSEMGTLWYLWSPVLISLAALFSKVTEG. Topologically, residues 31-913 are extracellular; sequence RGILESIQRF…PDQAAKGLSD (883 aa). Over residues 233-245 the composition is skewed to basic and acidic residues; the sequence is DERGDCAKEDSRK. 2 disordered regions span residues 233–263 and 885–906; these read DERGDCAKEDSRKSGGAPAGHNDVDESSPPL and SFPDQVDLPGSNVGTEEHDPDQ. A helical membrane pass occupies residues 914-934; the sequence is LEIGMYALLGVFCLAILVFLI. At 935-1097 the chain is on the cytoplasmic side; it reads NCVTFALKYR…SCMERLHEHV (163 aa). The segment at 1021–1042 is disordered; it reads MLTDDKEQKSEPPTSPTSKRKR.

This sequence belongs to the TMEM132 family. As to expression, expressed in mature oligodendrocytes in the brain.

The protein localises to the membrane. In terms of biological role, regulates neuronal morphology via inhibition of the WAVE regulatory complex (WCR), a complex that controls F-actin cytoskeletal dynamics. This Rattus norvegicus (Rat) protein is Transmembrane protein 132D (Tmem132d).